The sequence spans 652 residues: Aorsin (652 aa).

A signal peptide spans 1–22 (MRPLSHLSFFNGLLLGLSALSA). A propeptide spans 23–215 (ATSVVHERRE…PRPIQQHDVK (193 aa)) (removed in mature form). Asn112 carries an N-linked (GlcNAc...) asparagine glycan. The interval 177–211 (VNLNPSSGKPSSIRRRAAASKKTKLPARGPRPIQQ) is disordered. The segment covering 188–201 (SIRRRAAASKKTKL) has biased composition (basic residues). Asn218 and Asn247 each carry an N-linked (GlcNAc...) asparagine glycan. The region spanning 225 to 651 (LITPECIRAL…PKMLKLWLDL (427 aa)) is the Peptidase S53 domain. Residues Glu301 and Asp305 each act as charge relay system in the active site. 2 N-linked (GlcNAc...) asparagine glycosylation sites follow: Asn331 and Asn445. The active-site Charge relay system is the Ser569. 2 residues coordinate Ca(2+): Asp610 and Ile611. The N-linked (GlcNAc...) asparagine glycan is linked to Asn613. Ca(2+)-binding residues include Gly629 and Asp631.

Ca(2+) serves as cofactor. Post-translationally, N-glycosylated. In terms of processing, O-glycosylated.

The protein resides in the secreted. It localises to the extracellular space. Inhibited by antipain and leupeptin. In terms of biological role, serine endopeptidase which hydrolyzes a range of fluorogenic peptide substrates containing the basic residues arginine or lysine at the P1 position and prefers paired basic resides. Also hydrolyzes clupeine and salmine, activates plasminogen and converts trypsinogen to trypsin. This chain is Aorsin, found in Aspergillus oryzae (strain ATCC 42149 / RIB 40) (Yellow koji mold).